We begin with the raw amino-acid sequence, 3122 residues long: Abnormal spindle-like microcephaly-associated protein homolog (3122 aa).

2 disordered regions span residues 1-26 and 139-169; these read MATM…AGDP and KRSL…NESF. Basic and acidic residues predominate over residues 10–21; that stretch reads PEERGRRARPDP. The tract at residues 289–388 is sufficient for interaction with KATNA1:KATNB1; that stretch reads STQTQIHFLS…KDSMGHVGQQ (100 aa). A phosphoserine mark is found at serine 348, serine 373, and serine 573. The tract at residues 579–600 is disordered; sequence PSTVARTTKKEGHTSKRISSLE. The region spanning 888-1024 is the Calponin-homology (CH) 1 domain; it reads KASKELLLAF…LLWKIALAFQ (137 aa). A coiled-coil region spans residues 1025 to 1045; sequence VDISLNLDQLKEEIDFLKHTH. Serine 1071 is modified (phosphoserine). The 152-residue stretch at 1078-1229 folds into the Calponin-homology (CH) 2 domain; it reads GDSVQLLMDW…YLSFLCARLL (152 aa). 32 IQ domains span residues 1234–1263, 1315–1346, 1410–1439, 1504–1535, 1550–1579, 1600–1629, 1623–1652, 1696–1725, 1719–1750, 1769–1798, 1792–1821, 1842–1871, 1865–1896, 1915–1946, 1938–1967, 1988–2017, 2011–2042, 2061–2092, 2134–2165, 2157–2188, 2207–2238, 2230–2261, 2279–2310, 2302–2333, 2343–2374, 2366–2397, 2416–2447, 2491–2522, 2602–2633, 2674–2705, 2724–2755, and 2849–2880; these read EIRA…RDKA, QNKS…VILQ, QTKA…VVIQ, KRAA…CVLQ, LKKM…AAIT, TRSS…SVIK, ALAS…ATIK, VRES…AAIS, QCKA…LVIQ, VKRA…AAVT, QSTA…SAVK, TREA…AAVK, QHEA…AVIQ, LRHA…ALIQ, QHQC…AALQ, TKAA…AAVT, CHKA…IVIQ, LRRA…TLIE, TLKA…TLIQ, MHFA…TMVQ, LRRS…TLIQ, MHLA…IWIQ, LEKA…TVIQ, MHRA…VVIQ, QKHA…TLIQ, MHSS…IFVQ, LRKA…ALIQ, QHSA…KVIQ, KVEA…NIIE, RHRA…LIIQ, LKKS…RLFH, and ITSC…IRRS.

As to quaternary structure, interacts with KATNA1 and KATNB1; katanin complex formation KATNA1:KATNB1 is required for the association. In terms of tissue distribution, expressed in fetal brain, peripheral nervous system, liver and spleen. In the adult, expressed exclusively in testis, ovary and spleen.

The protein resides in the cytoplasm. Its subcellular location is the cytoskeleton. It is found in the spindle. The protein localises to the nucleus. Involved in mitotic spindle regulation and coordination of mitotic processes. The function in regulating microtubule dynamics at spindle poles including spindle orientation, astral microtubule density and poleward microtubule flux seem to depend on its association with the katanin complex formed by KATNA1 and KATNB1. Enhances the microtubule lattice severing activity of KATNA1 by recruiting the katanin complex to microtubules. Can block microtubule minus-end growth and reversely this function can be enhanced by the katanin complex. May have a preferential role in regulating neurogenesis. This chain is Abnormal spindle-like microcephaly-associated protein homolog (Aspm), found in Mus musculus (Mouse).